A 139-amino-acid chain; its full sequence is Large ribosomal subunit protein uL16 (139 aa).

Belongs to the universal ribosomal protein uL16 family. In terms of assembly, part of the 50S ribosomal subunit.

Functionally, binds 23S rRNA and is also seen to make contacts with the A and possibly P site tRNAs. This is Large ribosomal subunit protein uL16 from Protochlamydia amoebophila (strain UWE25).